Consider the following 178-residue polypeptide: Translation initiation factor IF-3 (178 aa).

Belongs to the IF-3 family. As to quaternary structure, monomer.

It localises to the cytoplasm. Its function is as follows. IF-3 binds to the 30S ribosomal subunit and shifts the equilibrium between 70S ribosomes and their 50S and 30S subunits in favor of the free subunits, thus enhancing the availability of 30S subunits on which protein synthesis initiation begins. The chain is Translation initiation factor IF-3 from Ralstonia nicotianae (strain ATCC BAA-1114 / GMI1000) (Ralstonia solanacearum).